Consider the following 181-residue polypeptide: Acireductone dioxygenase (181 aa).

Fe(2+) is bound by residues histidine 97, histidine 99, glutamate 103, and histidine 141. Residues histidine 97, histidine 99, glutamate 103, and histidine 141 each coordinate Ni(2+).

This sequence belongs to the acireductone dioxygenase (ARD) family. In terms of assembly, monomer. Requires Fe(2+) as cofactor. The cofactor is Ni(2+).

It catalyses the reaction 1,2-dihydroxy-5-(methylsulfanyl)pent-1-en-3-one + O2 = 3-(methylsulfanyl)propanoate + CO + formate + 2 H(+). It carries out the reaction 1,2-dihydroxy-5-(methylsulfanyl)pent-1-en-3-one + O2 = 4-methylsulfanyl-2-oxobutanoate + formate + 2 H(+). Its pathway is amino-acid biosynthesis; L-methionine biosynthesis via salvage pathway; L-methionine from S-methyl-5-thio-alpha-D-ribose 1-phosphate: step 5/6. Its function is as follows. Catalyzes 2 different reactions between oxygen and the acireductone 1,2-dihydroxy-3-keto-5-methylthiopentene (DHK-MTPene) depending upon the metal bound in the active site. Fe-containing acireductone dioxygenase (Fe-ARD) produces formate and 2-keto-4-methylthiobutyrate (KMTB), the alpha-ketoacid precursor of methionine in the methionine recycle pathway. Ni-containing acireductone dioxygenase (Ni-ARD) produces methylthiopropionate, carbon monoxide and formate, and does not lie on the methionine recycle pathway. The chain is Acireductone dioxygenase from Pseudomonas syringae pv. syringae (strain B728a).